The following is a 400-amino-acid chain: F-box/LRR-repeat protein 14 (400 aa).

One can recognise an F-box domain in the interval 2–48 (ETHISCLFPELLAMIFGYLDVRDKGRAAQVCTAWRDAAYHKSVWRGV). Residues 2–48 (ETHISCLFPELLAMIFGYLDVRDKGRAAQVCTAWRDAAYHKSVWRGV) form a required for down-regulation of SNAI1 region. LRR repeat units follow at residues 144 to 163 (GLEV…GLLL), 170 to 191 (RLKS…GHLA), 203 to 225 (GLEQ…HISR), 229 to 250 (GLRL…LHLS), and 254 to 275 (SLRS…MHLA).

In terms of assembly, part of a SCF (SKP1-cullin-F-box) ubiquitin-protein ligase complex. Interacts with SKP1 and CUL1. Interacts with SNAI1; the interaction requires the phosphorylation of the two serine residues in the substrate destruction motif D-S-G-X(2,3,4)-S.

It is found in the cytoplasm. In terms of biological role, substrate-recognition component of some SCF (SKP1-CUL1-F-box protein)-type E3 ubiquitin-protein ligase complexes. The SCF(FBXL14) complex acts by mediating ubiquitination and subsequent degradation of SNAI1. The polypeptide is F-box/LRR-repeat protein 14 (FBXL14) (Bos taurus (Bovine)).